Here is a 161-residue protein sequence, read N- to C-terminus: ATP synthase subunit b 1 (161 aa).

Residues Glu-6–Phe-26 form a helical membrane-spanning segment.

It belongs to the ATPase B chain family. F-type ATPases have 2 components, F(1) - the catalytic core - and F(0) - the membrane proton channel. F(1) has five subunits: alpha(3), beta(3), gamma(1), delta(1), epsilon(1). F(0) has three main subunits: a(1), b(2) and c(10-14). The alpha and beta chains form an alternating ring which encloses part of the gamma chain. F(1) is attached to F(0) by a central stalk formed by the gamma and epsilon chains, while a peripheral stalk is formed by the delta and b chains.

It localises to the cell inner membrane. Functionally, f(1)F(0) ATP synthase produces ATP from ADP in the presence of a proton or sodium gradient. F-type ATPases consist of two structural domains, F(1) containing the extramembraneous catalytic core and F(0) containing the membrane proton channel, linked together by a central stalk and a peripheral stalk. During catalysis, ATP synthesis in the catalytic domain of F(1) is coupled via a rotary mechanism of the central stalk subunits to proton translocation. Component of the F(0) channel, it forms part of the peripheral stalk, linking F(1) to F(0). In Bradyrhizobium diazoefficiens (strain JCM 10833 / BCRC 13528 / IAM 13628 / NBRC 14792 / USDA 110), this protein is ATP synthase subunit b 1.